Reading from the N-terminus, the 421-residue chain is Adenylosuccinate synthetase (421 aa).

GTP contacts are provided by residues 11-17 (GDEGKGK) and 39-41 (GHT). Residue D12 is the Proton acceptor of the active site. Residues D12 and G39 each coordinate Mg(2+). IMP contacts are provided by residues 12–15 (DEGK), 37–40 (NAGH), T129, R143, N219, T234, and R298. H40 acts as the Proton donor in catalysis. Residue 294–300 (VTTGRRR) coordinates substrate. GTP contacts are provided by residues R300, 326–328 (KLD), and 409–411 (GTG).

It belongs to the adenylosuccinate synthetase family. Homodimer. Mg(2+) is required as a cofactor.

It localises to the cytoplasm. The catalysed reaction is IMP + L-aspartate + GTP = N(6)-(1,2-dicarboxyethyl)-AMP + GDP + phosphate + 2 H(+). The protein operates within purine metabolism; AMP biosynthesis via de novo pathway; AMP from IMP: step 1/2. In terms of biological role, plays an important role in the de novo pathway and in the salvage pathway of purine nucleotide biosynthesis. Catalyzes the first committed step in the biosynthesis of AMP from IMP. In Paracoccidioides brasiliensis (strain Pb03), this protein is Adenylosuccinate synthetase.